The following is a 115-amino-acid chain: Probable 4-amino-4-deoxy-L-arabinose-phosphoundecaprenol flippase subunit ArnE (115 aa).

A run of 4 helical transmembrane segments spans residues 1 to 21 (MIVG…GQLC), 43 to 63 (WLAL…NVLQ), 65 to 85 (LPLS…TLAA), and 93 to 113 (TTAR…LMSI). Positions 44–113 (LALAVLLLGL…IMLGILLMSI (70 aa)) constitute an EamA domain.

The protein belongs to the ArnE family. In terms of assembly, heterodimer of ArnE and ArnF.

Its subcellular location is the cell inner membrane. The protein operates within bacterial outer membrane biogenesis; lipopolysaccharide biosynthesis. In terms of biological role, translocates 4-amino-4-deoxy-L-arabinose-phosphoundecaprenol (alpha-L-Ara4N-phosphoundecaprenol) from the cytoplasmic to the periplasmic side of the inner membrane. This chain is Probable 4-amino-4-deoxy-L-arabinose-phosphoundecaprenol flippase subunit ArnE, found in Serratia proteamaculans (strain 568).